The sequence spans 795 residues: Forkhead box protein P4 (795 aa).

Residues methionine 1 to alanine 25 show a composition bias toward polar residues. The interval methionine 1–methionine 62 is disordered. Residues alanine 36–aspartate 45 show a composition bias toward low complexity. 2 positions are modified to phosphoserine: serine 58 and serine 92. Residue lysine 181 forms a Glycyl lysine isopeptide (Lys-Gly) (interchain with G-Cter in SUMO2) linkage. 2 disordered regions span residues proline 233–glutamine 252 and threonine 265–glycine 310. Positions serine 292–proline 303 are enriched in basic and acidic residues. The C2H2-type zinc finger occupies glycine 312–histidine 337. Positions valine 354–leucine 375 are leucine-zipper. Residues proline 379 to lysine 437 form a disordered region. Lysine 383 participates in a covalent cross-link: Glycyl lysine isopeptide (Lys-Gly) (interchain with G-Cter in SUMO2). A DNA-binding region (fork-head) is located at residues arginine 459–leucine 549. Phosphoserine is present on serine 546. The tract at residues alanine 589–methionine 671 is disordered. Positions serine 609–isoleucine 627 are enriched in polar residues. The span at glutamine 628–proline 642 shows a compositional bias: basic and acidic residues.

In terms of assembly, forms homodimers and heterodimers with FOXP1 and FOXP2. Dimerization is required for DNA-binding. As to expression, expressed in the adult heart, brain, spleen lung, liver, kidney and testes.

The protein resides in the nucleus. Functionally, transcriptional repressor that represses lung-specific expression. This chain is Forkhead box protein P4, found in Mus musculus (Mouse).